The following is a 299-amino-acid chain: Probable phosphate butyryltransferase (299 aa).

It belongs to the phosphate acetyltransferase and butyryltransferase family.

It carries out the reaction butanoyl-CoA + phosphate = butanoyl phosphate + CoA. In terms of biological role, catalyzes the conversion of butyryl-CoA through butyryl phosphate to butyrate. The chain is Probable phosphate butyryltransferase (yqiS) from Bacillus subtilis (strain 168).